The chain runs to 222 residues: Deoxyribose-phosphate aldolase (222 aa).

D90 (proton donor/acceptor) is an active-site residue. K152 (schiff-base intermediate with acetaldehyde) is an active-site residue. K181 serves as the catalytic Proton donor/acceptor.

Belongs to the DeoC/FbaB aldolase family. DeoC type 1 subfamily.

The protein localises to the cytoplasm. The enzyme catalyses 2-deoxy-D-ribose 5-phosphate = D-glyceraldehyde 3-phosphate + acetaldehyde. The protein operates within carbohydrate degradation; 2-deoxy-D-ribose 1-phosphate degradation; D-glyceraldehyde 3-phosphate and acetaldehyde from 2-deoxy-alpha-D-ribose 1-phosphate: step 2/2. Catalyzes a reversible aldol reaction between acetaldehyde and D-glyceraldehyde 3-phosphate to generate 2-deoxy-D-ribose 5-phosphate. In Pectobacterium atrosepticum (strain SCRI 1043 / ATCC BAA-672) (Erwinia carotovora subsp. atroseptica), this protein is Deoxyribose-phosphate aldolase.